The following is a 434-amino-acid chain: Prenyltransferase fogH (434 aa).

Glutamate 86 lines the L-tryptophan pocket. Substrate contacts are provided by arginine 101, arginine 248, lysine 250, tyrosine 252, and tyrosine 346.

This sequence belongs to the tryptophan dimethylallyltransferase family.

The protein operates within secondary metabolite biosynthesis. Functionally, prenyltransferase; part of the gene cluster that mediates the biosynthesis of flavoglaucin and congeners (including aspergin, dihydroauroglaucin and auroglaucin), prenylated salicylaldehyde derivatives carrying a saturated or an unsaturated C-7 side chain. The PKS fogA releases the carboxylic acid (8E,10E,12E)-3,5,7-trihydroxytetradeca-8,10,12-trienoic acid as its product, as well as derivatives with one and two double bonds. FogA is indeed able to reduce the initial triketide, thus being at least partially responsible for the differently saturated heptyl side chains of flavoglaucin congeners. The oxidoreductases fogB, fogC and fogD modify the nascent polyketide in fogA-bound form and, together, fogA, fogB, fogC and fogD are necessary for the formation of the aromatic core and the cyclized PKS products are released as salicyl alcohols. In particular, fogB is responsible for oxidation of a hydroxyl group or reduction of remaining double bond(s) at the C-7 residue whereas fogD is probably involved in the reductive release of the modified PKS products. The cytochrome P450 monooxygenase fogE is then responsible for the hydroxylation at C-3 of the benzene ring. The fogE products are substrates of the prenyltransferase fogH and the prenylated benzyl alcohols are subsequently oxidized by the fogF to produce the final aryl aldehydes flavoglaucin and congeners. The short-chain dehydrogenase fogG does not seem to be involved in the biosynthesis of the prenylated salicylaldehyde derivatives. This Aspergillus ruber (strain CBS 135680) protein is Prenyltransferase fogH.